Consider the following 469-residue polypeptide: Protein RUFY3 (469 aa).

Thr5 and Thr12 each carry phosphothreonine. Phosphoserine is present on residues Ser34 and Ser49. Thr51 is subject to Phosphothreonine. Residues 95–227 form the RUN domain; the sequence is DSDYAPLQQF…IDANFCMKGE (133 aa). 2 coiled-coil regions span residues 271-362 and 422-463; these read NRHL…VEKE and KSEL…AANK.

As to quaternary structure, interacts with PAK1. Interacts (via C-terminus) with Ras-related Rab-5 proteins. Interacts (via C-terminus) with Ras-related Rap-2 proteins. Interacts with PIK3CA and PIK3R1. Interacts (via N-terminus) with FSCN1; this interaction induces neuron axon development. Interacts with DBN1. Interacts (via the second coiled coil) with GTP-, but not GDP-bound ARL8A and ARL8B. Interacts with dynactin/DCTN1 and the dynein intermediate chain DYNC1I1/2. Directly interacts with DYNC1LI1. In terms of processing, phosphorylated by PAK1.

The protein resides in the cytoplasm. The protein localises to the endomembrane system. It localises to the cell projection. Its subcellular location is the invadopodium. It is found in the growth cone. The protein resides in the perikaryon. The protein localises to the filopodium. It localises to the lamellipodium. Its subcellular location is the lysosome. In terms of biological role, ARL8 effector that promotes the coupling of endolysosomes to dynein-dynactin for retrograde transport along microtubules. Acts by binding both GTP-bound ARL8 and dynein-dynactin. In nonneuronal cells, promotes concentration of endolysosomes in the juxtanuclear area. In hippocampal neurons, drives retrograde transport of endolysosomes from the axon to the soma. Plays a role in the generation of neuronal polarity formation and axon growth. Implicated in the formation of a single axon by developing neurons. May inhibit the formation of additional axons by inhibition of PI3K in minor neuronal processes. Plays a role in the formation of F-actin-enriched protrusive structures at the cell periphery. Plays a role in cytoskeletal organization by regulating the subcellular localization of FSCN1 and DBN1 at axonal growth cones. The protein is Protein RUFY3 of Pongo abelii (Sumatran orangutan).